Here is a 132-residue protein sequence, read N- to C-terminus: uncharacterized protein (132 aa).

The next 4 helical transmembrane spans lie at 15-37 (FPEY…LLLY), 49-71 (AFIP…LRLF), 81-103 (VILT…LALV), and 110-129 (LAAT…MAFV).

It is found in the cell membrane. This is an uncharacterized protein from Archaeoglobus fulgidus (strain ATCC 49558 / DSM 4304 / JCM 9628 / NBRC 100126 / VC-16).